We begin with the raw amino-acid sequence, 789 residues long: Glycerol-3-phosphate acyltransferase (789 aa).

The short motif at 276–281 is the HXXXXD motif element; it reads HRSYID.

It belongs to the GPAT/DAPAT family.

Its subcellular location is the cell membrane. It carries out the reaction sn-glycerol 3-phosphate + an acyl-CoA = a 1-acyl-sn-glycero-3-phosphate + CoA. The protein operates within phospholipid metabolism; CDP-diacylglycerol biosynthesis; CDP-diacylglycerol from sn-glycerol 3-phosphate: step 1/3. This chain is Glycerol-3-phosphate acyltransferase, found in Mycobacterium bovis (strain ATCC BAA-935 / AF2122/97).